Consider the following 424-residue polypeptide: GTPase Obg (424 aa).

Positions 1–158 constitute an Obg domain; the sequence is MFYDQAKIYV…RNLLLELKLL (158 aa). The region spanning 159-329 is the OBG-type G domain; the sequence is ADVGLVGFPN…LVYAAAKALP (171 aa). GTP-binding positions include 165–172, 190–194, 212–215, 282–285, and 310–312; these read GFPNVGKS, FTTLV, DIPG, NKMD, and SAA. 2 residues coordinate Mg(2+): Ser172 and Thr192. The region spanning 347-424 is the OCT domain; the sequence is TQASAPHRFE…IAGIEFEWEE (78 aa).

It belongs to the TRAFAC class OBG-HflX-like GTPase superfamily. OBG GTPase family. In terms of assembly, monomer. It depends on Mg(2+) as a cofactor.

Its subcellular location is the cytoplasm. In terms of biological role, an essential GTPase which binds GTP, GDP and possibly (p)ppGpp with moderate affinity, with high nucleotide exchange rates and a fairly low GTP hydrolysis rate. Plays a role in control of the cell cycle, stress response, ribosome biogenesis and in those bacteria that undergo differentiation, in morphogenesis control. The polypeptide is GTPase Obg (Desulfitobacterium hafniense (strain Y51)).